Reading from the N-terminus, the 75-residue chain is Veswaprin-b (75 aa).

The N-terminal stretch at 1–24 is a signal peptide; it reads MSSGGLLLLLGLLTLWAELTPISG. Residues 23–42 form a disordered region; it reads SGQDRPKKPGLRPPRPQKPP. The region spanning 27 to 72 is the WAP; atypical domain; the sequence is RPKKPGLRPPRPQKPPCVRECKNDWRCPGEQKCCRYGCIYECRDPI. 3 disulfides stabilise this stretch: cysteine 43–cysteine 64, cysteine 47–cysteine 59, and cysteine 53–cysteine 68.

The protein belongs to the venom waprin family. Expressed by the venom gland.

Its subcellular location is the secreted. Its function is as follows. Damages membranes of susceptible bacteria. Has no hemolytic activity. Not toxic to mice. Does not inhibit the proteinases elastase and cathepsin G. In Demansia vestigiata (Lesser black whip snake), this protein is Veswaprin-b.